Here is a 1151-residue protein sequence, read N- to C-terminus: Importin beta (1151 aa).

24 HEAT repeats span residues 1–36 (MDLASFQNLLQQCQTEQDTQKRKEVEDFYFKYKQEE), 37–82 (PASY…GNGN), 83–132 (PECV…VAQF), 133–175 (PEFF…TKIG), 176–222 (GKAI…DSVI), 223–269 (PNSV…AVLK), 270–316 (PMVK…RAKK), 317–377 (AISE…KVIF), 378–416 (PLIKDFVSYAKANPTVHNCFAVANIFTITAEGLARLVTK), 417–453 (EDIVFTIDTLLELSNHPHQRVRYSVLSAIGQLSEDYA), 454–495 (PTFQ…HLKK), 496–540 (AETY…LKND), 541–593 (FADM…AGTL), 594–642 (PQLF…PETF), 643–704 (PKYM…MRKT), 705–756 (PAAF…TVAS), 757–811 (PPAV…SYTE), 812–880 (TVNK…ALGD), 881–932 (LSLD…KYLS), 933–978 (PANS…YEGD), 979–1027 (PGLA…AQAF), 1028–1074 (PTEL…ARND), 1075–1120 (PNFM…VLTQ), and 1121–1151 (IAGHGTILADTIAKCSEYVQKTYSLYTSVRQ).

It belongs to the importin beta family.

It localises to the nucleus intermembrane space. Its subcellular location is the cytoplasm. The protein resides in the nucleus. Functions in nuclear protein import as nuclear transport receptor. Involved in encystation process. Constitutive expression enhances cyst production and increases transcription of endogenous genes involved in encystation. Level of mRNA of the transcriptional factor myb1-like protein increases in early stages of the encystation process followed by increased mRNAs of the cyst wall proteins cwp1-3. In Giardia intestinalis (strain ATCC 50803 / WB clone C6) (Giardia lamblia), this protein is Importin beta.